Here is a 452-residue protein sequence, read N- to C-terminus: L-seryl-tRNA(Sec) selenium transferase (452 aa).

The residue at position 285 (Lys285) is an N6-(pyridoxal phosphate)lysine.

It belongs to the SelA family. The cofactor is pyridoxal 5'-phosphate.

It localises to the cytoplasm. It catalyses the reaction L-seryl-tRNA(Sec) + selenophosphate + H(+) = L-selenocysteinyl-tRNA(Sec) + phosphate. It functions in the pathway aminoacyl-tRNA biosynthesis; selenocysteinyl-tRNA(Sec) biosynthesis; selenocysteinyl-tRNA(Sec) from L-seryl-tRNA(Sec) (bacterial route): step 1/1. Converts seryl-tRNA(Sec) to selenocysteinyl-tRNA(Sec) required for selenoprotein biosynthesis. In Aquifex aeolicus (strain VF5), this protein is L-seryl-tRNA(Sec) selenium transferase.